Here is a 2282-residue protein sequence, read N- to C-terminus: Protein Ycf2 (2282 aa).

An ATP-binding site is contributed by 1637 to 1644; that stretch reads GSIGTGRS.

The protein belongs to the Ycf2 family.

The protein localises to the plastid. It is found in the chloroplast stroma. Its function is as follows. Probable ATPase of unknown function. Its presence in a non-photosynthetic plant (Epifagus virginiana) and experiments in tobacco indicate that it has an essential function which is probably not related to photosynthesis. The chain is Protein Ycf2 from Citrus sinensis (Sweet orange).